A 347-amino-acid chain; its full sequence is Homocysteine S-methyltransferase 3 (347 aa).

In terms of domain architecture, Hcy-binding spans 12–333 (LMTDFLEKCG…NTIRAIAKVL (322 aa)). Zn(2+) is bound by residues Cys-251, Cys-318, and Cys-319.

In terms of assembly, monomer. The cofactor is Zn(2+). Expressed predominantly in rosette leaves. Expressed in roots, cauline leaves and developing seeds.

It carries out the reaction S-methyl-L-methionine + L-homocysteine = 2 L-methionine + H(+). Functionally, catalyzes methyl transfer from S-methylmethionine (SMM) to adenosyl-L-homocysteine (AdoMet). SMM degradation (by HMT-1, HMT-2 and HMT-3) and biosynthesis (by MMT1) constitute the SMM cycle in plants, which is probably required to achieve short term control of AdoMet level. This chain is Homocysteine S-methyltransferase 3 (HMT3), found in Arabidopsis thaliana (Mouse-ear cress).